Here is a 5061-residue protein sequence, read N- to C-terminus: E3 ubiquitin-protein ligase rnf213-beta (5061 aa).

Residues 1–12 (MTRKRKSGKKGK) are compositionally biased toward basic residues. Positions 1–334 (MTRKRKSGKK…QRKPSPVRAP (334 aa)) are disordered. Composition is skewed to polar residues over residues 24–52 (GGST…TQKD) and 75–87 (SDGS…TNKE). Over residues 100-110 (LQKKGPQKRKG) the composition is skewed to basic residues. Polar residues-rich tracts occupy residues 127–163 (QTSY…TSAS) and 172–200 (TETV…QPPQ). Basic and acidic residues-rich tracts occupy residues 217 to 229 (KGSE…EESV) and 236 to 289 (LSEI…EEPK). Positions 292 to 301 (AAAAATGKTG) are enriched in low complexity. Residues 306 to 322 (EQTNQIEANQDSTMESK) show a composition bias toward polar residues. ATP contacts are provided by residues 1923–1928 (AVGKSL), Glu-2023, Asp-2074, Lys-2417, and Ser-2492. Residues Cys-3957, Cys-3960, Cys-3972, His-3974, Cys-3977, Cys-3980, Cys-3993, Cys-3996, Cys-4451, and His-4455 each contribute to the Zn(2+) site. An RING-type zinc finger spans residues 3957–3997 (CRVCLMELSEPFALPCEHVFCRSCLRRSMEREEAQHCPVCR). The RZ-type zinc-finger motif lies at 4429–4501 (MPDDHTSEAK…AYGDYDRTRP (73 aa)). Cys-4462 acts as the Nucleophile; for E3 ubiquitin-lipopolysaccharide ligase activity in catalysis. Residues Cys-4471 and Cys-4474 each contribute to the Zn(2+) site.

Belongs to the AAA ATPase family.

The protein localises to the cytoplasm. It is found in the cytosol. The protein resides in the lipid droplet. It catalyses the reaction S-ubiquitinyl-[E2 ubiquitin-conjugating enzyme]-L-cysteine + [acceptor protein]-L-lysine = [E2 ubiquitin-conjugating enzyme]-L-cysteine + N(6)-ubiquitinyl-[acceptor protein]-L-lysine.. The catalysed reaction is ATP + H2O = ADP + phosphate + H(+). Its pathway is protein modification; protein ubiquitination. Its function is as follows. Atypical E3 ubiquitin ligase that can catalyze ubiquitination of both proteins and lipids, and which is involved in various processes, such as lipid metabolism, angiogenesis and cell-autonomous immunity. Acts as a key immune sensor by catalyzing ubiquitination of the lipid A moiety of bacterial lipopolysaccharide (LPS) via its RZ-type zinc-finger: restricts the proliferation of cytosolic bacteria, such as Salmonella, by generating the bacterial ubiquitin coat through the ubiquitination of LPS. Ubiquitination of LPS triggers cell-autonomous immunity, such as antibacterial autophagy, leading to degradation of the microbial invader. Involved in lipid metabolism by regulating fat storage and lipid droplet formation; act by inhibiting the lipolytic process. Also regulates lipotoxicity by inhibiting desaturation of fatty acids. Also acts as an E3 ubiquitin-protein ligase via its RING-type zinc finger. Involved in the non-canonical Wnt signaling pathway in vascular development: acts by mediating ubiquitination and degradation of proteins downstream of rspo3, leading to inhibit the non-canonical Wnt signaling pathway and promoting vessel regression. Also has ATPase activity; ATPase activity is required for ubiquitination of LPS. In Danio rerio (Zebrafish), this protein is E3 ubiquitin-protein ligase rnf213-beta (rnf213b).